A 124-amino-acid polypeptide reads, in one-letter code: Putative membrane protein insertion efficiency factor (124 aa).

Belongs to the UPF0161 family.

It is found in the cell inner membrane. In terms of biological role, could be involved in insertion of integral membrane proteins into the membrane. The sequence is that of Putative membrane protein insertion efficiency factor from Psychrobacter cryohalolentis (strain ATCC BAA-1226 / DSM 17306 / VKM B-2378 / K5).